We begin with the raw amino-acid sequence, 1065 residues long: WD repeat-containing protein on Y chromosome (1065 aa).

8 WD repeats span residues 153 to 197, 326 to 365, 369 to 408, 459 to 498, 511 to 550, 598 to 638, 745 to 784, and 828 to 867; these read EEVT…IRTA, RVPLGVSTFFVAESHNIVVTGGPDTFVRIWDVYIPTEPSA, GHNGGIVMVFVQPEENKVYSVDYQKIIKVWDLQEHTLLQT, THAAPVSVVLYNRLFRNIVTCGLDSYIIVWDPWSGRRKII, IIDIEITAATFDPLEQFLLTGARDGTLKIWNYNNAVVVRN, FHTD…RRYS, KTGDCVLTMCTDRKNRYIYTGTAFGYIKVWHIVNYCVPEA, and AHLKAINSIAFINLPKIVFSGSHDYSCRLWTQGGRYLGTL. Basic and acidic residues predominate over residues 915-925; sequence PAKRAEVKAPE. Disordered regions lie at residues 915–936 and 1024–1065; these read PAKRAEVKAPEDRDEETAQTDD and GSAL…QQSE. The span at 926-936 shows a compositional bias: acidic residues; the sequence is DRDEETAQTDD.

The polypeptide is WD repeat-containing protein on Y chromosome (Drosophila persimilis (Fruit fly)).